Reading from the N-terminus, the 1577-residue chain is Pentafunctional AROM polypeptide (1577 aa).

The interval 1 to 392 (MASVGLEKVN…YGTSAHVVSD (392 aa)) is 3-dehydroquinate synthase. Residues 80-83 (ETYK), 111-113 (GGV), and D116 contribute to the NAD(+) site. R127 contributes to the 7-phospho-2-dehydro-3-deoxy-D-arabino-heptonate binding site. 136 to 137 (TS) provides a ligand contact to NAD(+). Positions 143 and 149 each coordinate 7-phospho-2-dehydro-3-deoxy-D-arabino-heptonate. Residue K158 participates in NAD(+) binding. N159 serves as a coordination point for 7-phospho-2-dehydro-3-deoxy-D-arabino-heptonate. NAD(+) contacts are provided by residues 176–179 (WLET) and N187. E191 lines the Zn(2+) pocket. 7-phospho-2-dehydro-3-deoxy-D-arabino-heptonate-binding positions include 191–194 (EVIK) and K258. Residue E268 is the Proton acceptor; for 3-dehydroquinate synthase activity of the active site. Residues 272 to 276 (RNLLN) and H279 each bind 7-phospho-2-dehydro-3-deoxy-D-arabino-heptonate. Zn(2+) is bound at residue H279. Residue H283 is the Proton acceptor; for 3-dehydroquinate synthase activity of the active site. Residues H295 and K364 each coordinate 7-phospho-2-dehydro-3-deoxy-D-arabino-heptonate. Position 295 (H295) interacts with Zn(2+). The interval 405-863 (VYPFTDVRSS…WDVLHSRLGA (459 aa)) is EPSP synthase. The active-site For EPSP synthase activity is the C845. The interval 882–1071 (VVLIGMRAAG…VPVKRSTFVC (190 aa)) is shikimate kinase. Position 886-893 (886-893 (GMRAAGKS)) interacts with ATP. Residues 1072 to 1284 (LTFQNLLPEM…AAPGQLTLRQ (213 aa)) are 3-dehydroquinase. The active-site Proton acceptor; for 3-dehydroquinate dehydratase activity is the H1189. Catalysis depends on K1218, which acts as the Schiff-base intermediate with substrate; for 3-dehydroquinate dehydratase activity. Residues 1297–1577 (PKKMFVVGSP…APVYDAVTQE (281 aa)) are shikimate dehydrogenase.

It in the N-terminal section; belongs to the sugar phosphate cyclases superfamily. Dehydroquinate synthase family. This sequence in the 2nd section; belongs to the EPSP synthase family. The protein in the 3rd section; belongs to the shikimate kinase family. In the 4th section; belongs to the type-I 3-dehydroquinase family. It in the C-terminal section; belongs to the shikimate dehydrogenase family. Homodimer. Requires Zn(2+) as cofactor.

It localises to the cytoplasm. It carries out the reaction 7-phospho-2-dehydro-3-deoxy-D-arabino-heptonate = 3-dehydroquinate + phosphate. The enzyme catalyses 3-dehydroquinate = 3-dehydroshikimate + H2O. The catalysed reaction is shikimate + NADP(+) = 3-dehydroshikimate + NADPH + H(+). It catalyses the reaction shikimate + ATP = 3-phosphoshikimate + ADP + H(+). It carries out the reaction 3-phosphoshikimate + phosphoenolpyruvate = 5-O-(1-carboxyvinyl)-3-phosphoshikimate + phosphate. It participates in metabolic intermediate biosynthesis; chorismate biosynthesis; chorismate from D-erythrose 4-phosphate and phosphoenolpyruvate: step 2/7. Its pathway is metabolic intermediate biosynthesis; chorismate biosynthesis; chorismate from D-erythrose 4-phosphate and phosphoenolpyruvate: step 3/7. It functions in the pathway metabolic intermediate biosynthesis; chorismate biosynthesis; chorismate from D-erythrose 4-phosphate and phosphoenolpyruvate: step 4/7. The protein operates within metabolic intermediate biosynthesis; chorismate biosynthesis; chorismate from D-erythrose 4-phosphate and phosphoenolpyruvate: step 5/7. It participates in metabolic intermediate biosynthesis; chorismate biosynthesis; chorismate from D-erythrose 4-phosphate and phosphoenolpyruvate: step 6/7. In terms of biological role, the AROM polypeptide catalyzes 5 consecutive enzymatic reactions in prechorismate polyaromatic amino acid biosynthesis. The protein is Pentafunctional AROM polypeptide of Eremothecium gossypii (strain ATCC 10895 / CBS 109.51 / FGSC 9923 / NRRL Y-1056) (Yeast).